Here is a 938-residue protein sequence, read N- to C-terminus: Translation initiation factor IF-2 (938 aa).

A compositionally biased stretch (basic and acidic residues) spans 57–205 (DKSKKVASKE…PKSEETKSEE (149 aa)). The disordered stretch occupies residues 57-350 (DKSKKVASKE…RSADDLAQQE (294 aa)). The span at 206–215 (TTEGGESEEK) shows a compositional bias: acidic residues. The span at 248-259 (KKEEKKEDDKKD) shows a compositional bias: basic and acidic residues. Composition is skewed to basic residues over residues 260 to 270 (KDRRKKRRRRI) and 285 to 296 (GAKKGGRTRSKP). Positions 297 to 319 (ITKEEPTEEEVQKQVRETLEKLQ) are enriched in basic and acidic residues. Positions 323–333 (SKGKGAKYRRQ) are enriched in basic residues. Over residues 334–344 (KRDEHRQRSAD) the composition is skewed to basic and acidic residues. A tr-type G domain is found at 434-602 (TRAPIVTVMG…KVLLEAEILE (169 aa)). Residues 443–450 (GHVDHGKT) form a G1 region. 443 to 450 (GHVDHGKT) lines the GTP pocket. Positions 468–472 (GITQH) are G2. Positions 490–493 (DTPG) are G3. GTP-binding positions include 490–494 (DTPGH) and 544–547 (NKSD). Residues 544–547 (NKSD) are G4. Residues 580-582 (SAK) are G5.

Belongs to the TRAFAC class translation factor GTPase superfamily. Classic translation factor GTPase family. IF-2 subfamily.

It localises to the cytoplasm. Its function is as follows. One of the essential components for the initiation of protein synthesis. Protects formylmethionyl-tRNA from spontaneous hydrolysis and promotes its binding to the 30S ribosomal subunits. Also involved in the hydrolysis of GTP during the formation of the 70S ribosomal complex. The polypeptide is Translation initiation factor IF-2 (Christiangramia forsetii (strain DSM 17595 / CGMCC 1.15422 / KT0803) (Gramella forsetii)).